The primary structure comprises 488 residues: 3-octaprenyl-4-hydroxybenzoate carboxy-lyase (488 aa).

Position 172 (Asn172) interacts with Mn(2+). Residues 175–177 (IYR), 189–191 (RWL), and 194–195 (RG) contribute to the prenylated FMN site. Glu238 contacts Mn(2+). Catalysis depends on Asp287, which acts as the Proton donor.

This sequence belongs to the UbiD family. As to quaternary structure, homohexamer. Prenylated FMN is required as a cofactor. The cofactor is Mn(2+).

It is found in the cell membrane. It catalyses the reaction a 4-hydroxy-3-(all-trans-polyprenyl)benzoate + H(+) = a 2-(all-trans-polyprenyl)phenol + CO2. The protein operates within cofactor biosynthesis; ubiquinone biosynthesis. In terms of biological role, catalyzes the decarboxylation of 3-octaprenyl-4-hydroxy benzoate to 2-octaprenylphenol, an intermediate step in ubiquinone biosynthesis. In Legionella pneumophila subsp. pneumophila (strain Philadelphia 1 / ATCC 33152 / DSM 7513), this protein is 3-octaprenyl-4-hydroxybenzoate carboxy-lyase.